Reading from the N-terminus, the 424-residue chain is Ancylostoma secreted protein (424 aa).

A signal peptide spans 1 to 18 (MFSPVIVSVIFTIAFCDA). SCP domains lie at 41–177 (LDFH…SCIY) and 242–387 (LSVH…VCQY).

It belongs to the CRISP family.

The protein resides in the secreted. Its function is as follows. Associated with the transition to parasitism by infective hookworm larvae. The polypeptide is Ancylostoma secreted protein (ASP) (Ancylostoma caninum (Dog hookworm)).